The sequence spans 1177 residues: Lysylphosphatidylglycerol biosynthesis bifunctional protein LysX (1177 aa).

Disordered stretches follow at residues 1–40 (MRRA…AKFV) and 61–85 (VTLA…PRNR). The phosphatidylglycerol lysyltransferase stretch occupies residues 1–676 (MRRAGRSRQF…LLHHDGSAPD (676 aa)). Positions 65-85 (SPGSRSGSGPRSGPRLGPRNR) are enriched in low complexity. A run of 6 helical transmembrane segments spans residues 93–113 (VPAA…LGSV), 135–155 (FPDT…ALTA), 159–179 (IAWL…VADI), 189–209 (IFGE…LVLA), 227–247 (AVLV…VELF), and 281–301 (VFLN…ATIV). The disordered stretch occupies residues 673 to 693 (SAPDVSGLRPERTDAEEARSR). The interval 677–1177 (VSGLRPERTD…TLPFPLAKPH (501 aa)) is lysine--tRNA ligase. The span at 681 to 693 (RPERTDAEEARSR) shows a compositional bias: basic and acidic residues. Residues 738–816 (ITVAGRILRI…SLIVTDWRMI (79 aa)) constitute a DNA-binding region (OB). Asp-1089 and Glu-1096 together coordinate Mg(2+).

It in the N-terminal section; belongs to the LPG synthetase family. This sequence in the C-terminal section; belongs to the class-II aminoacyl-tRNA synthetase family. It depends on Mg(2+) as a cofactor.

The protein resides in the cell membrane. The catalysed reaction is tRNA(Lys) + L-lysine + ATP = L-lysyl-tRNA(Lys) + AMP + diphosphate. It carries out the reaction L-lysyl-tRNA(Lys) + a 1,2-diacyl-sn-glycero-3-phospho-(1'-sn-glycerol) = a 1,2-diacyl-sn-glycero-3-phospho-1'-(3'-O-L-lysyl)-sn-glycerol + tRNA(Lys). In terms of biological role, catalyzes the production of L-lysyl-tRNA(Lys)transfer and the transfer of a lysyl group from L-lysyl-tRNA(Lys) to membrane-bound phosphatidylglycerol (PG), which produces lysylphosphatidylglycerol (LPG), one of the components of the bacterial membrane with a positive net charge. LPG synthesis contributes to the resistance to cationic antimicrobial peptides (CAMPs) and likely protects M.tuberculosis against the CAMPs produced by competiting microorganisms (bacteriocins). In fact, the modification of anionic phosphatidylglycerol with positively charged L-lysine results in repulsion of the peptides. The protein is Lysylphosphatidylglycerol biosynthesis bifunctional protein LysX (lysX) of Mycolicibacterium paratuberculosis (strain ATCC BAA-968 / K-10) (Mycobacterium paratuberculosis).